The primary structure comprises 240 residues: MADIKYKRVILKLSGEALAGDKGFGINPPVLKDVAKELKEVHDLGVQIAIVVGGGNMWRGVTGAELGMERAQADYIGMLATIMNALSLQDALESIGVPTRVQTSIEMRQIAEPYIRRKAIRHLEKDRIVIFAGGTGSPYFSTDTTAALRAAEINADAILMGKNGVDGVYSADPNKVKDATKFDHLTHMDIIEKNLHVMDTTASSLSMDNHIPLVVFNLNTSGNIMKVVTGQEVGTTIEGD.

Lysine 12–glycine 15 contacts ATP. An involved in allosteric activation by GTP region spans residues glycine 20–glycine 25. UMP is bound at residue glycine 54. The ATP site is built by glycine 55 and arginine 59. Residues aspartate 74 and threonine 135–threonine 142 contribute to the UMP site. Residues asparagine 163, tyrosine 169, and aspartate 172 each coordinate ATP.

Belongs to the UMP kinase family. As to quaternary structure, homohexamer.

Its subcellular location is the cytoplasm. It carries out the reaction UMP + ATP = UDP + ADP. The protein operates within pyrimidine metabolism; CTP biosynthesis via de novo pathway; UDP from UMP (UMPK route): step 1/1. Its activity is regulated as follows. Allosterically activated by GTP. Inhibited by UTP. In terms of biological role, catalyzes the reversible phosphorylation of UMP to UDP. The polypeptide is Uridylate kinase (Limosilactobacillus reuteri (strain DSM 20016) (Lactobacillus reuteri)).